We begin with the raw amino-acid sequence, 349 residues long: Nuclear distribution protein nudE homolog 1 (349 aa).

Residues 23 to 189 (AMKYKTCSEE…ELAVQQKQEK (167 aa)) adopt a coiled-coil conformation. Residues 182-201 (AVQQKQEKPKSNMGSPETER) form a disordered region.

Belongs to the nudE family. As to quaternary structure, self-associates. Interacts with pafah1b1. Phosphorylated in mitosis.

The protein resides in the cytoplasm. It localises to the cytoskeleton. The protein localises to the microtubule organizing center. It is found in the centrosome. Its subcellular location is the spindle. The protein resides in the chromosome. It localises to the centromere. The protein localises to the kinetochore. It is found in the cleavage furrow. Its subcellular location is the cytoplasmic vesicle membrane. In terms of biological role, required for centrosome duplication and formation and function of the mitotic spindle. This Xenopus tropicalis (Western clawed frog) protein is Nuclear distribution protein nudE homolog 1 (nde1).